Consider the following 522-residue polypeptide: Cytochrome P450 1A3 (522 aa).

Residue Phe229 participates in substrate binding. Residue Cys463 participates in heme binding.

This sequence belongs to the cytochrome P450 family. It depends on heme as a cofactor. Liver.

Its subcellular location is the endoplasmic reticulum membrane. It localises to the microsome membrane. It carries out the reaction an organic molecule + reduced [NADPH--hemoprotein reductase] + O2 = an alcohol + oxidized [NADPH--hemoprotein reductase] + H2O + H(+). Cytochromes P450 are a group of heme-thiolate monooxygenases. They oxidize a variety of structurally unrelated compounds, including steroids, fatty acids, and xenobiotics. In Oncorhynchus mykiss (Rainbow trout), this protein is Cytochrome P450 1A3 (cyp1a3).